The primary structure comprises 130 residues: Ribosome-binding factor A (130 aa).

Belongs to the RbfA family. As to quaternary structure, monomer. Binds 30S ribosomal subunits, but not 50S ribosomal subunits or 70S ribosomes.

It localises to the cytoplasm. Functionally, one of several proteins that assist in the late maturation steps of the functional core of the 30S ribosomal subunit. Associates with free 30S ribosomal subunits (but not with 30S subunits that are part of 70S ribosomes or polysomes). Required for efficient processing of 16S rRNA. May interact with the 5'-terminal helix region of 16S rRNA. This Prochlorococcus marinus (strain MIT 9301) protein is Ribosome-binding factor A.